The sequence spans 404 residues: MKRIRDLWVRTNLIKKIGIGVVIGLLLGILLPDVTAIGILGQLFVGALKAIAPLLVFALVAQAISHQRSGQQTNMTLIIVLYLLGTFLAALVAVIANYLFPLTLTLNTPVNTELSPPQGIVQVFQTLLLKLVDNPINALATANYIGVLAWALIFGLALKSVPSDFKHLIKTAADVTSQIVVWIINVAPIGIMGLVFSTVSENGISILSDYALLILVLVGTMLFVALVVNPLLAFVLTHQNPYPLVFRCLKDSGLTAFFTRSSAANIPVNLQLCEDLGLSQATYLVSIPLGAMINMGGAAITINVLTLAAVNTFGIQIDFLTALLLSVVAAISACGASGVTGGSLLLIPVACSLFGISSDLAMQVVGVGFIVGVIQDSCETALNSSTDVLFTAIAENAFWKQKKA.

The next 9 membrane-spanning stretches (helical) occupy residues 17–37 (IGIGVVIGLLLGILLPDVTAI), 39–59 (ILGQLFVGALKAIAPLLVFAL), 75–95 (MTLIIVLYLLGTFLAALVAVI), 138–158 (ALATANYIGVLAWALIFGLAL), 179–199 (IVVWIINVAPIGIMGLVFSTV), 212–232 (LLILVLVGTMLFVALVVNPLL), 287–307 (IPLGAMINMGGAAITINVLTL), 319–339 (FLTALLLSVVAAISACGASGV), and 354–374 (FGISSDLAMQVVGVGFIVGVI).

It belongs to the dicarboxylate/amino acid:cation symporter (DAACS) (TC 2.A.23) family.

Its subcellular location is the cell membrane. It carries out the reaction L-serine(in) + Na(+)(in) = L-serine(out) + Na(+)(out). It catalyses the reaction L-threonine(in) + Na(+)(in) = L-threonine(out) + Na(+)(out). Functionally, involved in the import of serine and threonine into the cell, with the concomitant import of sodium (symport system). In Streptococcus equi subsp. equi (strain 4047), this protein is Serine/threonine transporter SstT.